A 400-amino-acid polypeptide reads, in one-letter code: Iron(III) enterobactin esterase (400 aa).

This sequence belongs to the Fes family. In terms of assembly, monomer.

The protein resides in the cytoplasm. It catalyses the reaction Fe(III)-enterobactin + 3 H2O + H(+) = Fe(III)-[N-(2,3-dihydroxybenzoyl)-L-serine] + 2 N-(2,3-dihydroxybenzoyl)-L-serine. The catalysed reaction is Fe(III)-enterobactin + H2O = Fe(III)-[N-(2,3-dihydroxybenzoyl)-L-serine]3 + H(+). The enzyme catalyses Fe(III)-[N-(2,3-dihydroxybenzoyl)-L-serine]3 + H2O + H(+) = Fe(III)-[N-(2,3-dihydroxybenzoyl)-L-serine]2 + N-(2,3-dihydroxybenzoyl)-L-serine. It carries out the reaction Fe(III)-[N-(2,3-dihydroxybenzoyl)-L-serine]2 + H2O + H(+) = Fe(III)-[N-(2,3-dihydroxybenzoyl)-L-serine] + N-(2,3-dihydroxybenzoyl)-L-serine. It catalyses the reaction enterobactin + 3 H2O = 3 N-(2,3-dihydroxybenzoyl)-L-serine + 2 H(+). Its activity is regulated as follows. Inhibited by N-ethylmaleimide. In terms of biological role, catalyzes the hydrolysis of ferric enterobactin (Fe-Ent). Is responsible for the release of iron from ferric enterobactin. Also catalyzes the hydrolysis of iron-free enterobactin (Ent). Cleavage of ferric enterobactin results in a mixture of three hydrolysis products, 2,3-dihydroxybenzoylserine (DHBS), the linear dimer (DHBS)2 and the linear trimer (DHBS)3, while cleavage of iron-free enterobactin yields only the monomer. Hydrolysis of ferric enterobactin is less efficient than hydrolysis of unliganded enterobactin. It also cleaves the aluminum (III) complex at a rate similar to the ferric complex. The polypeptide is Iron(III) enterobactin esterase (Escherichia coli (strain K12)).